The sequence spans 368 residues: Endophilin-A2 (368 aa).

Residues 1 to 21 (MSVAGLKKQFYKASQLVSEKV) are membrane-binding amphipathic helix. Residues 18 to 249 (SEKVGGAEGT…LKRRMREASS (232 aa)) form the BAR domain. Residues 60 to 87 (PNPASRAKLTMLNTVSKIRGQVKNPGYP) form a required for dimerization upon membrane association region. The stretch at 145-250 (NLCEKDLKEI…KRRMREASSR (106 aa)) forms a coiled coil. The interaction with ARC stretch occupies residues 218 to 254 (LVDAQLDYHRQAVQILDELAEKLKRRMREASSRPKRE). The interval 244 to 308 (MREASSRPKR…PSRSMPPLDQ (65 aa)) is disordered. Over residues 245-263 (REASSRPKREYKPKPREPF) the composition is skewed to basic and acidic residues. Phosphoserine occurs at positions 288 and 292. T298 is subject to Phosphothreonine. In terms of domain architecture, SH3 spans 306 to 365 (LDQPSCKALYDFEPENDGELGFHEGDVITLTNQIDENWYEGMLDGQSGFFPLSYVEVLVP). Y315 is subject to Phosphotyrosine.

This sequence belongs to the endophilin family. Interacts with ARC. Interacts with SYNJ1 and DNM1. Interacts with PDCD6IP. Interacts with BIN2. As to expression, ubiquitous. Higher expression in pancreas, placenta, prostate, testis and uterus.

It is found in the cytoplasm. It localises to the early endosome membrane. The protein localises to the cell projection. Its subcellular location is the podosome. In terms of biological role, implicated in endocytosis. May recruit other proteins to membranes with high curvature. This chain is Endophilin-A2 (SH3GL1), found in Homo sapiens (Human).